The primary structure comprises 299 residues: Heat stress transcription factor B-2a (299 aa).

A DNA-binding region spans residues 21 to 115 (PTPFLTKTFN…LLREIQRRKI (95 aa)). Residues 119–157 (HQTVVAPSSEQRNQTMVVSPSNSGEDNNNNQVMSSSPSS) form a disordered region. The interval 166 to 211 (TGNGGLSVELLEENEKLRSQNIQLNRELTQMKSICDNIYSLMSNYV) is hydrophobic repeat HR-A/B. A Nuclear localization signal motif is present at residues 261–264 (KRTR).

This sequence belongs to the HSF family. Class B subfamily. In terms of assembly, homotrimer. In terms of processing, exhibits temperature-dependent phosphorylation.

It is found in the nucleus. Transcriptional regulator that specifically binds DNA sequence 5'-AGAAnnTTCT-3' known as heat shock promoter elements (HSE). This Arabidopsis thaliana (Mouse-ear cress) protein is Heat stress transcription factor B-2a (HSFB2A).